A 258-amino-acid polypeptide reads, in one-letter code: 3-deoxy-manno-octulosonate cytidylyltransferase (258 aa).

It belongs to the KdsB family.

It localises to the cytoplasm. It carries out the reaction 3-deoxy-alpha-D-manno-oct-2-ulosonate + CTP = CMP-3-deoxy-beta-D-manno-octulosonate + diphosphate. It participates in nucleotide-sugar biosynthesis; CMP-3-deoxy-D-manno-octulosonate biosynthesis; CMP-3-deoxy-D-manno-octulosonate from 3-deoxy-D-manno-octulosonate and CTP: step 1/1. Its pathway is bacterial outer membrane biogenesis; lipopolysaccharide biosynthesis. Its function is as follows. Activates KDO (a required 8-carbon sugar) for incorporation into bacterial lipopolysaccharide in Gram-negative bacteria. The chain is 3-deoxy-manno-octulosonate cytidylyltransferase from Blochmanniella floridana.